The following is a 61-amino-acid chain: Large ribosomal subunit protein uL30 (61 aa).

This sequence belongs to the universal ribosomal protein uL30 family. As to quaternary structure, part of the 50S ribosomal subunit.

This is Large ribosomal subunit protein uL30 from Chlorobium phaeobacteroides (strain BS1).